The chain runs to 142 residues: Large ribosomal subunit protein uL11 (142 aa).

Belongs to the universal ribosomal protein uL11 family. As to quaternary structure, part of the ribosomal stalk of the 50S ribosomal subunit. Interacts with L10 and the large rRNA to form the base of the stalk. L10 forms an elongated spine to which L12 dimers bind in a sequential fashion forming a multimeric L10(L12)X complex. One or more lysine residues are methylated.

Functionally, forms part of the ribosomal stalk which helps the ribosome interact with GTP-bound translation factors. The sequence is that of Large ribosomal subunit protein uL11 from Tolumonas auensis (strain DSM 9187 / NBRC 110442 / TA 4).